We begin with the raw amino-acid sequence, 275 residues long: NH(3)-dependent NAD(+) synthetase (275 aa).

46 to 53 contributes to the ATP binding site; it reads GISGGQDS. Mg(2+) is bound at residue Asp-52. Arg-140 lines the deamido-NAD(+) pocket. Thr-160 lines the ATP pocket. Glu-165 serves as a coordination point for Mg(2+). Deamido-NAD(+)-binding residues include Lys-173 and Asp-180. 2 residues coordinate ATP: Lys-189 and Thr-211. Residue 260–261 participates in deamido-NAD(+) binding; it reads HK.

It belongs to the NAD synthetase family. As to quaternary structure, homodimer.

The enzyme catalyses deamido-NAD(+) + NH4(+) + ATP = AMP + diphosphate + NAD(+) + H(+). It participates in cofactor biosynthesis; NAD(+) biosynthesis; NAD(+) from deamido-NAD(+) (ammonia route): step 1/1. Functionally, catalyzes the ATP-dependent amidation of deamido-NAD to form NAD. Uses ammonia as a nitrogen source. This chain is NH(3)-dependent NAD(+) synthetase, found in Salmonella dublin (strain CT_02021853).